Here is a 446-residue protein sequence, read N- to C-terminus: MGMGGQSGEGCSSGDCVKPEAQYSWEEIQKHNLKTDKWLVIERKVYNISQWVKRHPGGMRIIGHYAGEDATDAFHAFHPDKTFVRKFLKPLYIGELAENEPSQDRDKNAQQVEDFRALRKTAEDMRLFKSNPAFFIFYLFHILLIEFLAWCTLHYLGTGWIPAIITVLLLTISQAQAGWLQHDFGHLSVFEKSKWNHLVHKFVIGHLKGASANWWNHRHFQHHAKPNIFSKDPDVNMVNVFVLGGTQPVEFGKKGIKYLPYNHQHLYFFLIGPPLLIPVYFTVQIIKTMIARKDWVDLAWSVSYYVRFFFTFVPFFGVLGSLALLNAVRFFESHWFVWVTQMNHLPMAIEHEKYQDWLNTQLAATCNIEPSFFNDWFSGHLNFQIEHHLFPTMPRHNYWKIAPLVRSLCSKYNVTYEEKCLYHGFRDVLRSLKKSGQLWLDAYLHK.

Residues 1 to 132 (MGMGGQSGEG…EDMRLFKSNP (132 aa)) lie on the Cytoplasmic side of the membrane. The 78-residue stretch at 20 to 97 (EAQYSWEEIQ…LKPLYIGELA (78 aa)) folds into the Cytochrome b5 heme-binding domain. Residues 133–153 (AFFIFYLFHILLIEFLAWCTL) form a helical membrane-spanning segment. A topological domain (lumenal) is located at residue histidine 154. A helical transmembrane segment spans residues 155–175 (YLGTGWIPAIITVLLLTISQA). The Cytoplasmic segment spans residues 176 to 265 (QAGWLQHDFG…IKYLPYNHQH (90 aa)). Positions 182 to 186 (HDFGH) match the Histidine box-1 motif. The Histidine box-2 motif lies at 219 to 223 (HFQHH). Residues 266-286 (LYFFLIGPPLLIPVYFTVQII) form a helical membrane-spanning segment. At 287-307 (KTMIARKDWVDLAWSVSYYVR) the chain is on the lumenal side. A helical membrane pass occupies residues 308–328 (FFFTFVPFFGVLGSLALLNAV). Residues 329-446 (RFFESHWFVW…QLWLDAYLHK (118 aa)) are Cytoplasmic-facing. The Histidine box-3 signature appears at 384–388 (QIEHH).

Belongs to the fatty acid desaturase type 1 family.

It localises to the endoplasmic reticulum membrane. It functions in the pathway lipid metabolism; polyunsaturated fatty acid biosynthesis. Functionally, component of a lipid metabolic pathway that catalyzes biosynthesis of highly unsaturated fatty acids (HUFA) from precursor essential polyunsaturated fatty acids (PUFA) linoleic acid (LA) (18:2n-6) and alpha-linolenic acid (ALA) (18:3n-3). Catalyzes the first and rate limiting step in this pathway which is the desaturation of LA (18:2n-6) and ALA (18:3n-3) into gamma-linoleic acid (GLA) (18:3n-6) and stearidonic acid (18:4n-3) respectively and other desaturation steps. Highly unsaturated fatty acids (HUFA) play pivotal roles in many biological functions. This chain is Fatty acid desaturase 2 (fads2), found in Xenopus laevis (African clawed frog).